We begin with the raw amino-acid sequence, 560 residues long: Choline/ethanolamine transporter FLVCR1 (560 aa).

Residues 1–43 are disordered; that stretch reads MARPDDEVGPAVAPGHPLGKGYLPVPKGAPDGEARLVPQNGPE. The Cytoplasmic portion of the chain corresponds to 1-92; sequence MARPDDEVGP…EDVPCPACPP (92 aa). Residues 93-117 traverse the membrane as a helical segment; that stretch reads RTALSPRRFVVLLIFSLYSLVNAFQ. Residues 118 to 135 are Extracellular-facing; that stretch reads WIQYSSISNVFEDFYEVS. Residues 136 to 163 form a helical membrane-spanning segment; that stretch reads PLHINWLSMVYMVAYVPLIFPATWLLDT. The Cytoplasmic segment spans residues 164–165; it reads RG. The helical transmembrane segment at 166–185 threads the bilayer; the sequence is LRLTALLGSGLNCLGAWVKC. The Extracellular segment spans residues 186 to 192; it reads GSVQRHL. Residues 193 to 221 traverse the membrane as a helical segment; it reads FWVTMLGQILCSVAQVFILGLPSPVASVW. Gln207 contributes to the ethanolamine binding site. The Cytoplasmic segment spans residues 222-226; that stretch reads FGPKE. The chain crosses the membrane as a helical span at residues 227-252; the sequence is VSTACATAVLGNQLGTAVGFLLPPVL. At 253–270 the chain is on the extracellular side; sequence VPALGTQNSTGLLAHTQN. N-linked (GlcNAc...) asparagine glycosylation is present at Asn270. The chain crosses the membrane as a helical span at residues 271–300; that stretch reads NTDLLAHNINTMFYGTAFISTFLFFLTIIA. Residues 301–336 lie on the Cytoplasmic side of the membrane; that stretch reads FKEKPPLPPSQAQAVLRDSPPEEYSYKSSIWNLCRN. The chain crosses the membrane as a helical span at residues 337-367; it reads IPFVLLLVSYGIMTGAFYSISTLLNQIILTY. At 368 to 371 the chain is on the extracellular side; that stretch reads YVGE. Residues 372-400 traverse the membrane as a helical segment; the sequence is EVNAGRIGLTLVVAGMVGSILCGLWLDYT. Topologically, residues 401 to 402 are cytoplasmic; it reads KT. A helical membrane pass occupies residues 403–425; it reads YKQTTLIVYVLSFIGMLIFTFTL. Residues 426-428 are Extracellular-facing; sequence NLG. Residues 429 to 458 form a helical membrane-spanning segment; sequence YIIVVFFTGGILGFFMTGYLPLGFEFAVEI. Residues 459-466 lie on the Cytoplasmic side of the membrane; it reads TYPESEGM. Residues 467 to 492 traverse the membrane as a helical segment; it reads SSGLLNTAAQILGIFFTLAQGKITTD. Gln476 contributes to the ethanolamine binding site. Gln476 is a binding site for choline. The Extracellular portion of the chain corresponds to 493-495; the sequence is YNS. The helical transmembrane segment at 496–518 threads the bilayer; that stretch reads PEAGNIFLCAWMFVGIILTALIK. Over 519–560 the chain is Cytoplasmic; the sequence is SDLRRHNINTGLTNIDVKAVPVDSRVDPKPKVMVSIQSESSL. A Phosphoserine modification is found at Ser542.

The protein belongs to the major facilitator superfamily. Feline leukemia virus subgroup C receptor (TC 2.A.1.28.1) family.

The protein resides in the cell membrane. The protein localises to the mitochondrion membrane. The enzyme catalyses choline(out) = choline(in). It carries out the reaction ethanolamine(in) = ethanolamine(out). It catalyses the reaction heme b(in) = heme b(out). Uniporter that mediates the transport of extracellular choline and ethanolamine into cells, thereby playing a key role in phospholipid biosynthesis. Choline and ethanolamine are the precursors of phosphatidylcholine and phosphatidylethanolamine, respectively, the two most abundant phospholipids. Transport is not coupled with proton transport and is exclusively driven by the choline (or ethanolamine) gradient across the plasma membrane. Also acts as a heme b transporter that mediates heme efflux from the cytoplasm to the extracellular compartment. Its function is as follows. Uniporter that mediates the transport of extracellular choline and ethanolamine into cells. Choline and ethanolamine are the precursors of phosphatidylcholine and phosphatidylethanolamine, respectively, the two most abundant phospholipids. Transport is not coupled with proton transport and is exclusively driven by the choline (or ethanolamine) gradient across the plasma membrane. Also acts as a heme b transporter that mediates heme efflux from the cytoplasm to the extracellular compartment. Heme export depends on the presence of HPX and is required to maintain intracellular free heme balance, protecting cells from heme toxicity. Heme export provides protection from heme or ferrous iron toxicities in liver, brain, sensory neurons and during erythropoiesis, a process in which heme synthesis intensifies. Possibly export coproporphyrin and protoporphyrin IX, which are both intermediate products in the heme biosynthetic pathway. Does not export bilirubin. The molecular mechanism of heme transport, whether electrogenic, electroneutral or coupled to other ions, remains to be elucidated. In terms of biological role, heme transporter that promotes heme efflux from the mitochondrion to the cytoplasm. Essential for erythroid differentiation. This Mus musculus (Mouse) protein is Choline/ethanolamine transporter FLVCR1 (Flvcr1).